A 484-amino-acid polypeptide reads, in one-letter code: Acid alpha-amylase (484 aa).

The N-linked (GlcNAc...) asparagine glycan is linked to N24. A disulfide bond links C30 and C38. W83 serves as a coordination point for substrate. D121 serves as a coordination point for Ca(2+). H122 serves as a coordination point for substrate. C150 and C164 are oxidised to a cystine. A glycan (N-linked (GlcNAc...) asparagine) is linked at N157. Ca(2+)-binding residues include E162 and D175. N197 carries an N-linked (GlcNAc...) asparagine glycan. R204 provides a ligand contact to substrate. Residues D206, E210, and E230 each coordinate Ca(2+). The active-site Nucleophile is the D206. 209–210 (LE) contributes to the substrate binding site. Residue E230 is the Proton donor of the active site. Residue G234 coordinates substrate. C240 and C283 are joined by a disulfide. Substrate is bound by residues D297 and R344. A disulfide bond links C440 and C475.

It belongs to the glycosyl hydrolase 13 family. Monomer. Ca(2+) is required as a cofactor.

It is found in the secreted. The enzyme catalyses Endohydrolysis of (1-&gt;4)-alpha-D-glucosidic linkages in polysaccharides containing three or more (1-&gt;4)-alpha-linked D-glucose units.. The sequence is that of Acid alpha-amylase from Aspergillus niger.